A 338-amino-acid chain; its full sequence is Ketol-acid reductoisomerase (NADP(+)) (338 aa).

The KARI N-terminal Rossmann domain occupies 1 to 181 (MKVFYDKDAD…GGGRAGIIET (181 aa)). NADP(+)-binding positions include 24–27 (YGSQ), R47, and S52. The active site involves H107. G133 contacts NADP(+). A KARI C-terminal knotted domain is found at 182–327 (NFREETETDL…AKLRAMMPWI (146 aa)). Mg(2+) contacts are provided by D190, E194, E226, and E230. S251 contacts substrate.

This sequence belongs to the ketol-acid reductoisomerase family. The cofactor is Mg(2+).

It carries out the reaction (2R)-2,3-dihydroxy-3-methylbutanoate + NADP(+) = (2S)-2-acetolactate + NADPH + H(+). It catalyses the reaction (2R,3R)-2,3-dihydroxy-3-methylpentanoate + NADP(+) = (S)-2-ethyl-2-hydroxy-3-oxobutanoate + NADPH + H(+). Its pathway is amino-acid biosynthesis; L-isoleucine biosynthesis; L-isoleucine from 2-oxobutanoate: step 2/4. The protein operates within amino-acid biosynthesis; L-valine biosynthesis; L-valine from pyruvate: step 2/4. Its function is as follows. Involved in the biosynthesis of branched-chain amino acids (BCAA). Catalyzes an alkyl-migration followed by a ketol-acid reduction of (S)-2-acetolactate (S2AL) to yield (R)-2,3-dihydroxy-isovalerate. In the isomerase reaction, S2AL is rearranged via a Mg-dependent methyl migration to produce 3-hydroxy-3-methyl-2-ketobutyrate (HMKB). In the reductase reaction, this 2-ketoacid undergoes a metal-dependent reduction by NADPH to yield (R)-2,3-dihydroxy-isovalerate. This chain is Ketol-acid reductoisomerase (NADP(+)), found in Ralstonia pickettii (strain 12J).